We begin with the raw amino-acid sequence, 540 residues long: [Co(II) methylated amine-specific corrinoid protein] reductase (540 aa).

4Fe-4S ferredoxin-type domains follow at residues 471 to 500 (IILE…IVER) and 504 to 535 (RIAK…ITKL). The [4Fe-4S] cluster site is built by Cys-480, Cys-483, Cys-486, Cys-490, Cys-513, Cys-518, Cys-521, and Cys-525.

As to quaternary structure, monomer. [4Fe-4S] cluster is required as a cofactor.

It catalyses the reaction 2 Co(II)-[methylamine-specific corrinoid protein] + AH2 + ATP + H2O = 2 Co(I)-[methylamine-specific corrinoid protein] + A + ADP + phosphate + 3 H(+). It carries out the reaction 2 Co(II)-[dimethylamine-specific corrinoid protein] + AH2 + ATP + H2O = 2 Co(I)-[dimethylamine-specific corrinoid protein] + A + ADP + phosphate + 3 H(+). The catalysed reaction is 2 Co(II)-[trimethylamine-specific corrinoid protein] + AH2 + ATP + H2O = 2 Co(I)-[trimethylamine-specific corrinoid protein] + A + ADP + phosphate + 3 H(+). Its pathway is one-carbon metabolism; methanogenesis from methylamine. The protein operates within one-carbon metabolism; methanogenesis from dimethylamine. It participates in one-carbon metabolism; methanogenesis from trimethylamine. Its function is as follows. Reductase required for the activation of corrinoid-dependent methylamine methyltransferase reactions during methanogenesis. Mediates the ATP-dependent reduction of corrinoid proteins from the inactive cobalt(II) state to the active cobalt(I) state. Acts on the corrinoid proteins involved in methanogenesis from monomethylamine (MMA), dimethylamine (DMA) and trimethylamine (TMA), namely MtmC, MtbC and MttC, respectively. The sequence is that of [Co(II) methylated amine-specific corrinoid protein] reductase from Methanosarcina barkeri.